The following is an 89-amino-acid chain: Islet amyloid polypeptide (89 aa).

The signal sequence occupies residues 1 to 22; sequence MCLLKLPVVLIVLLVALHHLKA. Positions 23 to 31 are excised as a propeptide; sequence TPIESNQVE. Cysteine 35 and cysteine 40 are joined by a disulfide. Tyrosine 70 is modified (tyrosine amide). A propeptide spanning residues 74-89 is cleaved from the precursor; the sequence is STVDILNREPLNYLPF.

The protein belongs to the calcitonin family. In terms of assembly, can form homodimers. Interacts with IDE and INS. Interaction with INS inhibits homodimerization and fibril formation.

The protein resides in the secreted. Its function is as follows. Amylin/IAPP is a glucoregulatory peptide hormone that plays an important role in the regulation of energy homeostasis. Selectively inhibits insulin-stimulated glucose utilization and glycogen deposition in muscle, while not affecting adipocyte glucose metabolism. IAPP function is mediated by the CALCR-RAMPs (AMYRs) receptor complexes. Amylin can also bind CALCR receptor in the absence of RAMPs, although it is more selective for AMYRs. This is Islet amyloid polypeptide (IAPP) from Felis catus (Cat).